The sequence spans 476 residues: Tubulointerstitial nephritis antigen (476 aa).

Asn-38 carries an N-linked (GlcNAc...) asparagine glycan. Positions 59–107 constitute an SMB domain; sequence NFGCCEDRDDGCVTEFYAANALCYCDKFCDRENSDCCPDYKSFCREEKE. Intrachain disulfides connect Cys-63–Cys-70, Cys-70–Cys-102, Cys-81–Cys-83, Cys-81–Cys-95, Cys-87–Cys-94, and Cys-95–Cys-102. Asn-175, Asn-314, Asn-360, and Asn-455 each carry an N-linked (GlcNAc...) asparagine glycan.

The protein belongs to the peptidase C1 family. In terms of processing, it has been suggested that the active SMB domain may be permitted considerable disulfide bond heterogeneity or variability, thus 2 alternate disulfide patterns based on 3D structures are described with 1 disulfide bond conserved in both. In terms of tissue distribution, expressed in the kidney cortex, small intestine and cornea.

It localises to the secreted. It is found in the extracellular space. The protein localises to the extracellular matrix. The protein resides in the basement membrane. Its function is as follows. Mediates adhesion of proximal tubule epithelial cells via integrins alpha3-beta1 and alphaV-beta3. This is a non catalytic peptidase C1 family protein. The polypeptide is Tubulointerstitial nephritis antigen (TINAG) (Homo sapiens (Human)).